Here is a 462-residue protein sequence, read N- to C-terminus: Glycerol-3-phosphate acyltransferase ATS12, chloroplastic (462 aa).

Residues 1-82 (MFILSSSSST…DKESAQSAAT (82 aa)) constitute a chloroplast transit peptide. An HXXXXD motif motif is present at residues 233-238 (HQTEAD).

The protein belongs to the GPAT/DAPAT family.

It is found in the plastid. Its subcellular location is the chloroplast stroma. The catalysed reaction is a fatty acyl-[ACP] + sn-glycerol 3-phosphate = a 1-acyl-sn-glycero-3-phosphate + holo-[ACP]. It carries out the reaction sn-glycerol 3-phosphate + an acyl-CoA = a 1-acyl-sn-glycero-3-phosphate + CoA. The protein operates within phospholipid metabolism; CDP-diacylglycerol biosynthesis; CDP-diacylglycerol from sn-glycerol 3-phosphate: step 1/3. Its function is as follows. Esterifies the acyl-group from acyl-acyl carrier proteins (acyl-ACPs) to the sn-1 position of glycerol-3-phosphate. The physiological acyl donors in chloroplasts are acyl-ACPs, but acyl-CoAs are used as artificial donor for in vitro reactions. The enzyme from chilling-resistant plants discriminates against non-fluid palmitic acid and selects oleic acid whereas the enzyme from sensitive plants accepts both fatty acids. Squash is chilling-sensitive. Does not seem to discriminate between the acyl-ACP thioesters 18:1-ACP, 18:0-ACP and 16:0-ACP. Exhibits higher selectivity for 16:0-CoA than 18:1-CoA in vitro. This Cucurbita moschata (Winter crookneck squash) protein is Glycerol-3-phosphate acyltransferase ATS12, chloroplastic.